Consider the following 510-residue polypeptide: Light-independent protochlorophyllide reductase subunit B (510 aa).

Residue Asp-36 participates in [4Fe-4S] cluster binding. Residue Asp-296 is the Proton donor of the active site. 431 to 432 (GM) provides a ligand contact to substrate.

It belongs to the ChlB/BchB/BchZ family. Protochlorophyllide reductase is composed of three subunits; ChlL, ChlN and ChlB. Forms a heterotetramer of two ChlB and two ChlN subunits. The cofactor is [4Fe-4S] cluster.

It catalyses the reaction chlorophyllide a + oxidized 2[4Fe-4S]-[ferredoxin] + 2 ADP + 2 phosphate = protochlorophyllide a + reduced 2[4Fe-4S]-[ferredoxin] + 2 ATP + 2 H2O. The protein operates within porphyrin-containing compound metabolism; chlorophyll biosynthesis (light-independent). In terms of biological role, component of the dark-operative protochlorophyllide reductase (DPOR) that uses Mg-ATP and reduced ferredoxin to reduce ring D of protochlorophyllide (Pchlide) to form chlorophyllide a (Chlide). This reaction is light-independent. The NB-protein (ChlN-ChlB) is the catalytic component of the complex. This Synechococcus sp. (strain JA-3-3Ab) (Cyanobacteria bacterium Yellowstone A-Prime) protein is Light-independent protochlorophyllide reductase subunit B.